Here is an 80-residue protein sequence, read N- to C-terminus: Cytochrome c oxidase subunit 7A1, mitochondrial (80 aa).

The transit peptide at 1–21 directs the protein to the mitochondrion; that stretch reads MRALRVSQALVRSFSSTARNR. Over 22–46 the chain is Mitochondrial matrix; sequence FENRVAEKQKLFQEDNGLPVHLKGG. The helical transmembrane segment at 47–75 threads the bilayer; sequence ATDNILYRVTMTLCLGGTLYSLYCLGWAS. Over 76–80 the chain is Mitochondrial intermembrane; the sequence is FPHKK.

This sequence belongs to the cytochrome c oxidase VIIa family. In terms of assembly, component of the complex IV (CIV, cytochrome c oxidase), a multisubunit enzyme composed of 14 subunits. The complex is composed of a catalytic core of 3 subunits MT-CO1, MT-CO2 and MT-CO3, encoded in the mitochondrial DNA, and 11 supernumerary subunits COX4I1 (or COX4I2), COX5A, COX5B, COX6A2 (or COX6A1), COX6B1 (or COX6B2), COX6C, COX7A1 (or COX7A2), COX7B, COX7C, COX8B and NDUFA4, which are encoded in the nuclear genome. The complex exists as a monomer or a dimer and forms supercomplexes (SCs) in the inner mitochondrial membrane with NADH-ubiquinone oxidoreductase (complex I, CI) and ubiquinol-cytochrome c oxidoreductase (cytochrome b-c1 complex, complex III, CIII), resulting in different assemblies (supercomplex SCI(1)III(2)IV(1) and megacomplex MCI(2)III(2)IV(2)).

The protein localises to the mitochondrion inner membrane. The protein operates within energy metabolism; oxidative phosphorylation. Functionally, component of the mitochondrial respiratory complex IV (CIV, also named cytochrome c oxidase complex), the last enzyme in the mitochondrial electron transport chain which drives oxidative phosphorylation. The CIV complex is the component of the respiratory chain that catalyzes the reduction of oxygen to water. Acts as an assembly factor that specifically drives the homodimerization of CIV complexes, mediating the formation of mitochondrial respiratory supercomplexes (respirasomes) containing two CIV: supercomplxes with two molecules of CIV show improved activity. Despite being highly expressed in brown adipose tissue, not required for thermogenesis. The polypeptide is Cytochrome c oxidase subunit 7A1, mitochondrial (COX7A1) (Bos taurus (Bovine)).